The sequence spans 101 residues: MAKKSKIVKNQRRAATVARYASRRTALKDIIRSPSSAPEQRSTAQRALARQPRDASPVRLRNRDAIDGRPRGHLRKFGLSRVRVRQLAHDGHLPGVRKASW.

A disordered region spans residues 28 to 57 (KDIIRSPSSAPEQRSTAQRALARQPRDASP). Polar residues predominate over residues 33-45 (SPSSAPEQRSTAQ).

This sequence belongs to the universal ribosomal protein uS14 family. In terms of assembly, part of the 30S ribosomal subunit. Contacts proteins S3 and S10.

Binds 16S rRNA, required for the assembly of 30S particles and may also be responsible for determining the conformation of the 16S rRNA at the A site. This Mycobacterium bovis (strain ATCC BAA-935 / AF2122/97) protein is Small ribosomal subunit protein uS14A.